We begin with the raw amino-acid sequence, 49 residues long: Large ribosomal subunit protein bL33 (49 aa).

This sequence belongs to the bacterial ribosomal protein bL33 family.

The chain is Large ribosomal subunit protein bL33 from Thermosipho melanesiensis (strain DSM 12029 / CIP 104789 / BI429).